An 80-amino-acid polypeptide reads, in one-letter code: Large ribosomal subunit protein bL31B (80 aa).

It belongs to the bacterial ribosomal protein bL31 family. Type B subfamily. As to quaternary structure, part of the 50S ribosomal subunit.

The chain is Large ribosomal subunit protein bL31B from Streptococcus sanguinis (strain SK36).